A 325-amino-acid chain; its full sequence is MSDTASWQPSASIANLLKRAAIMAEIRRFFADRGVLEVETPAMSQATVTDVHLFPFQTRFVGPGAAAGIDLYLMTSPEYHMKRLLAAGSGPIYQLCRSFRNEEMGRHHNPEFTMLEWYRPHYDMYRLINEVDDLLQQVLECAPAETLSYQQAFQRHLEIDPLSADKAQLREVAQKLGAGDLANREEDRDTLLQLLFVLGVEPEIGKEKPAFVYHFPATQAALAEISPEDHRVAERFEVYFKGIELANGFRELTDSREQRQRFEQDNRKRAAAGLPQQPIDTYLLDALSAGMPESSGVALGVDRLVMLALKAEQLSDVIAFTVDRC.

Substrate is bound at residue 76–78 (SPE). ATP is bound by residues 100–102 (RNE) and Asn-109. Tyr-118 lines the substrate pocket. 244-245 (EL) lines the ATP pocket. Glu-251 contributes to the substrate binding site. Residue Gly-300 participates in ATP binding.

The protein belongs to the class-II aminoacyl-tRNA synthetase family. EpmA subfamily. As to quaternary structure, homodimer.

It carries out the reaction D-beta-lysine + L-lysyl-[protein] + ATP = N(6)-((3R)-3,6-diaminohexanoyl)-L-lysyl-[protein] + AMP + diphosphate + H(+). With EpmB is involved in the beta-lysylation step of the post-translational modification of translation elongation factor P (EF-P). Catalyzes the ATP-dependent activation of (R)-beta-lysine produced by EpmB, forming a lysyl-adenylate, from which the beta-lysyl moiety is then transferred to the epsilon-amino group of a conserved specific lysine residue in EF-P. This Erwinia tasmaniensis (strain DSM 17950 / CFBP 7177 / CIP 109463 / NCPPB 4357 / Et1/99) protein is Elongation factor P--(R)-beta-lysine ligase.